Here is a 341-residue protein sequence, read N- to C-terminus: Phosphate acyltransferase (341 aa).

This sequence belongs to the PlsX family. Homodimer. Probably interacts with PlsY.

The protein localises to the cytoplasm. It catalyses the reaction a fatty acyl-[ACP] + phosphate = an acyl phosphate + holo-[ACP]. Its pathway is lipid metabolism; phospholipid metabolism. Functionally, catalyzes the reversible formation of acyl-phosphate (acyl-PO(4)) from acyl-[acyl-carrier-protein] (acyl-ACP). This enzyme utilizes acyl-ACP as fatty acyl donor, but not acyl-CoA. The chain is Phosphate acyltransferase from Elusimicrobium minutum (strain Pei191).